Reading from the N-terminus, the 465-residue chain is Endo-1,3-1,4-beta-glycanase EglC (465 aa).

Hemolysin-type calcium-binding repeat units lie at residues 33 to 50 (YGTA…VDVT), 105 to 122 (FGNS…SQTI), and 123 to 140 (NGGA…ADTF). The region spanning 213-462 (LDRSVLTQTF…YVKAYSLDAD (250 aa)) is the GH16 domain. Glu-349 acts as the Nucleophile in catalysis. Glu-354 (proton donor) is an active-site residue.

Belongs to the glycosyl hydrolase 16 family.

It is found in the secreted. It participates in glycan metabolism; exopolysaccharide biosynthesis. Its function is as follows. Cleaves high molecular weight succinoglycan to yield LMW succinoglycan. Dynamically regulates the molecular weight distribution of succinoglycan by cleaving nascent succinoglycan only during a limited period after its synthesis, perhaps before it undergoes a time-dependent change in its conformation or aggregation state. In Rhizobium meliloti (strain 1021) (Ensifer meliloti), this protein is Endo-1,3-1,4-beta-glycanase EglC (eglC).